The chain runs to 275 residues: Formamidopyrimidine-DNA glycosylase (275 aa).

Catalysis depends on Pro-2, which acts as the Schiff-base intermediate with DNA. Glu-3 acts as the Proton donor in catalysis. Lys-58 serves as the catalytic Proton donor; for beta-elimination activity. Residues His-92, Arg-111, and Arg-154 each contribute to the DNA site. The FPG-type zinc-finger motif lies at 239 to 273; that stretch reads HVYHRQGLPCQRCGTPIERIKVAQRGTHFCPHCQV. The active-site Proton donor; for delta-elimination activity is the Arg-263.

It belongs to the FPG family. In terms of assembly, monomer. Requires Zn(2+) as cofactor.

It catalyses the reaction Hydrolysis of DNA containing ring-opened 7-methylguanine residues, releasing 2,6-diamino-4-hydroxy-5-(N-methyl)formamidopyrimidine.. It carries out the reaction 2'-deoxyribonucleotide-(2'-deoxyribose 5'-phosphate)-2'-deoxyribonucleotide-DNA = a 3'-end 2'-deoxyribonucleotide-(2,3-dehydro-2,3-deoxyribose 5'-phosphate)-DNA + a 5'-end 5'-phospho-2'-deoxyribonucleoside-DNA + H(+). In terms of biological role, involved in base excision repair of DNA damaged by oxidation or by mutagenic agents. Acts as a DNA glycosylase that recognizes and removes damaged bases. Has a preference for oxidized purines, such as 7,8-dihydro-8-oxoguanine (8-oxoG). Has AP (apurinic/apyrimidinic) lyase activity and introduces nicks in the DNA strand. Cleaves the DNA backbone by beta-delta elimination to generate a single-strand break at the site of the removed base with both 3'- and 5'-phosphates. This is Formamidopyrimidine-DNA glycosylase from Pediococcus pentosaceus (strain ATCC 25745 / CCUG 21536 / LMG 10740 / 183-1w).